Reading from the N-terminus, the 526-residue chain is Lysine--tRNA ligase (526 aa).

Positions 44–52 (PSGLPHIGT) match the 'HIGH' region motif. Positions 290–294 (KISKS) match the 'KMSKS' region motif. Lys-293 serves as a coordination point for ATP.

This sequence belongs to the class-I aminoacyl-tRNA synthetase family.

It localises to the cytoplasm. The enzyme catalyses tRNA(Lys) + L-lysine + ATP = L-lysyl-tRNA(Lys) + AMP + diphosphate. This Rickettsia typhi (strain ATCC VR-144 / Wilmington) protein is Lysine--tRNA ligase.